The primary structure comprises 415 residues: Glucose-1-phosphate adenylyltransferase (415 aa).

Alpha-D-glucose 1-phosphate contacts are provided by residues Y98, G163, 178 to 179 (EK), and S189.

The protein belongs to the bacterial/plant glucose-1-phosphate adenylyltransferase family. As to quaternary structure, homotetramer.

The enzyme catalyses alpha-D-glucose 1-phosphate + ATP + H(+) = ADP-alpha-D-glucose + diphosphate. The protein operates within glycan biosynthesis; glycogen biosynthesis. Its function is as follows. Involved in the biosynthesis of ADP-glucose, a building block required for the elongation reactions to produce glycogen. Catalyzes the reaction between ATP and alpha-D-glucose 1-phosphate (G1P) to produce pyrophosphate and ADP-Glc. This Fervidobacterium nodosum (strain ATCC 35602 / DSM 5306 / Rt17-B1) protein is Glucose-1-phosphate adenylyltransferase.